The chain runs to 310 residues: DNA damage-repair/toleration protein DRT102 (310 aa).

Alanine 2 is modified (N-acetylalanine). The region spanning 219–282 is the Cupin type-2 domain; the sequence is IVRFKAGSVE…HRVKYHEDTE (64 aa).

The sequence is that of DNA damage-repair/toleration protein DRT102 (DRT102) from Arabidopsis thaliana (Mouse-ear cress).